Reading from the N-terminus, the 247-residue chain is uncharacterized protein (247 aa).

A signal peptide spans 1-35 (MWGPGVTAEGLSVAPAPPPLLPLLLLLALALVAPS). N-linked (GlcNAc...) asparagine glycosylation is present at Asn57. A helical membrane pass occupies residues 82-102 (LSGLLILLVLFAIGYFLQRII). Positions 109-179 (YPRGQARPGQ…GGRSDPSCAS (71 aa)) are disordered. Over residues 160-172 (SGGGGRGRGGGGR) the composition is skewed to gly residues.

Its subcellular location is the membrane. This is an uncharacterized protein from Homo sapiens (Human).